The following is a 418-amino-acid chain: (+)-T-muurolol synthase ((2E,6E)-farnesyl diphosphate cyclizing) (418 aa).

Mg(2+)-binding residues include Asp-83 and Asp-88. A DDXXXD motif motif is present at residues 83–88 (DDEYCD). Arg-179 provides a ligand contact to substrate. Mg(2+)-binding residues include Asn-225 and Ser-229. Lys-232 contributes to the substrate binding site. Glu-233 is a Mg(2+) binding site. A substrate-binding site is contributed by 312-313 (RY). Residues 354 to 418 (LPEPGSDGAD…QQSTWRREHR (65 aa)) form a disordered region. Residues 402–412 (ASRSSGLQQST) show a composition bias toward polar residues.

This sequence belongs to the terpene synthase family. It depends on Mg(2+) as a cofactor.

It carries out the reaction (2E,6E)-farnesyl diphosphate + H2O = (+)-T-muurolol + diphosphate. It participates in secondary metabolite biosynthesis; terpenoid biosynthesis. In terms of biological role, catalyzes the conversion of (2E,6E)-farnesyl diphosphate (FPP) into (+)-T-muurolol via a 1,10-cyclization, which requires isomerization of FPP to nerolidyl diphosphate (NPP) and then abstraction of the pyrophosphate from intermediate NPP leading to a (E,Z)-germacradienyl (helminthogermacradienyl) cation. In Streptomyces clavuligerus, this protein is (+)-T-muurolol synthase ((2E,6E)-farnesyl diphosphate cyclizing).